Reading from the N-terminus, the 577-residue chain is MPFRLLIPLGLVCVLLPLHHGAPGPDGTAPDPAHYRERVKAMFYHAYDSYLENAFPYDELRPLTCDGHDTWGSFSLTLIDALDTLLILGNTSEFQRVVEVLQDNVDFDIDVNASVFETNIRVVGGLLSAHLLSKKAGVEVEAGWPCSGPLLRMAEEAARKLLPAFQTPTGMPYGTVNLLHGVNPGETPVTCTAGIGTFIVEFATLSSLTGDPVFEDVARVALMRLWESRSDIGLVGNHIDVLTGKWVAQDAGIGAGVDSYFEYLVKGAILLQDKKLMAMFLEYNKAIRNYTHFDDWYLWVQMYKGTVSMPVFQSLEAYWPGLQSLIGDIDNAMRTFLNYYTVWKQFGGLPEFYNIPQGYTVEKREGYPLRPELIESAMYLYRATGDPTLLELGRDAVESIEKISKVECGFATIKDLRDHKLDNRMESFFLAETVKYLYLLFHPNNFIHNNGSTFDSVMTPHGECILGAGGYIFNTEAHPIDPAALHCCRRLKEEQWEVEDLIKEFYSLKQSRPKRAQRKTVRSGPWEPQSGPATLSSPANQPREKQPAQQRTPLLSCPSQPFTSKLALLGQVFLDSS.

An N-terminal signal peptide occupies residues 1-21 (MPFRLLIPLGLVCVLLPLHHG). 4 N-linked (GlcNAc...) asparagine glycosylation sites follow: asparagine 90, asparagine 112, asparagine 289, and asparagine 450. The tract at residues 513-561 (PKRAQRKTVRSGPWEPQSGPATLSSPANQPREKQPAQQRTPLLSCPSQP) is disordered. Polar residues-rich tracts occupy residues 531-540 (GPATLSSPAN) and 547-561 (PAQQ…PSQP).

Belongs to the glycosyl hydrolase 47 family. N-glycosylated.

Its subcellular location is the endoplasmic reticulum lumen. In terms of biological role, involved in the endoplasmic reticulum-associated degradation (ERAD) pathway that targets misfolded glycoproteins for degradation in an N-glycan-dependent manner. May initiate ERAD by promoting the first mannose trimming step of ERAD substrates, from Man9GlcNAc2 to Man8GlcNAc2. Seems to recognize and bind to exposed hydrophobic regions in target proteins. The sequence is that of ER degradation-enhancing alpha-mannosidase-like protein 2 from Mus musculus (Mouse).